The primary structure comprises 127 residues: Aspartate 1-decarboxylase (127 aa).

The active-site Schiff-base intermediate with substrate; via pyruvic acid is Ser25. Ser25 is subject to Pyruvic acid (Ser). Residue Thr57 coordinates substrate. Residue Tyr58 is the Proton donor of the active site. Residue 73-75 (GSA) participates in substrate binding.

It belongs to the PanD family. As to quaternary structure, heterooctamer of four alpha and four beta subunits. Pyruvate serves as cofactor. In terms of processing, is synthesized initially as an inactive proenzyme, which is activated by self-cleavage at a specific serine bond to produce a beta-subunit with a hydroxyl group at its C-terminus and an alpha-subunit with a pyruvoyl group at its N-terminus.

Its subcellular location is the cytoplasm. The enzyme catalyses L-aspartate + H(+) = beta-alanine + CO2. Its pathway is cofactor biosynthesis; (R)-pantothenate biosynthesis; beta-alanine from L-aspartate: step 1/1. Functionally, catalyzes the pyruvoyl-dependent decarboxylation of aspartate to produce beta-alanine. The chain is Aspartate 1-decarboxylase from Polaromonas naphthalenivorans (strain CJ2).